Reading from the N-terminus, the 199-residue chain is Crossover junction endodeoxyribonuclease RuvC (199 aa).

Residues Asp17, Glu76, and Asp148 contribute to the active site. 3 residues coordinate Mg(2+): Asp17, Glu76, and Asp148.

Belongs to the RuvC family. As to quaternary structure, homodimer which binds Holliday junction (HJ) DNA. The HJ becomes 2-fold symmetrical on binding to RuvC with unstacked arms; it has a different conformation from HJ DNA in complex with RuvA. In the full resolvosome a probable DNA-RuvA(4)-RuvB(12)-RuvC(2) complex forms which resolves the HJ. Requires Mg(2+) as cofactor.

The protein resides in the cytoplasm. It catalyses the reaction Endonucleolytic cleavage at a junction such as a reciprocal single-stranded crossover between two homologous DNA duplexes (Holliday junction).. The RuvA-RuvB-RuvC complex processes Holliday junction (HJ) DNA during genetic recombination and DNA repair. Endonuclease that resolves HJ intermediates. Cleaves cruciform DNA by making single-stranded nicks across the HJ at symmetrical positions within the homologous arms, yielding a 5'-phosphate and a 3'-hydroxyl group; requires a central core of homology in the junction. The consensus cleavage sequence is 5'-(A/T)TT(C/G)-3'. Cleavage occurs on the 3'-side of the TT dinucleotide at the point of strand exchange. HJ branch migration catalyzed by RuvA-RuvB allows RuvC to scan DNA until it finds its consensus sequence, where it cleaves and resolves the cruciform DNA. The polypeptide is Crossover junction endodeoxyribonuclease RuvC (Mannheimia succiniciproducens (strain KCTC 0769BP / MBEL55E)).